We begin with the raw amino-acid sequence, 199 residues long: CASP-like protein 2B1 (199 aa).

The Cytoplasmic segment spans residues M1–R26. Residues L27–I47 traverse the membrane as a helical segment. Over A48 to K69 the chain is Extracellular. The helical transmembrane segment at A70–V90 threads the bilayer. Topologically, residues R91–P106 are cytoplasmic. Residues L107 to A127 traverse the membrane as a helical segment. Over A128–A164 the chain is Extracellular. Residues T165–F185 traverse the membrane as a helical segment. Over R186–W199 the chain is Cytoplasmic.

The protein belongs to the Casparian strip membrane proteins (CASP) family. Homodimer and heterodimers.

It is found in the cell membrane. This Eutrema halophilum (Salt cress) protein is CASP-like protein 2B1.